Reading from the N-terminus, the 797-residue chain is METALAKIPQQRQVFFLTILSLLWKSSSEAIRYSMPEETESGYMVANLAKDLGIRVGELSSRGAQIHYKGNKELLQLDAETGNLFLKEKLDRELLCGETEPCVLNFQIILENPMQFFQTELQLTDINDHSPEFPNKKMLLTIPESAHPGTVFPLKAARDSDIGSNAVQNYTVNPNLHFHVVTHSRTDGRKYPELVLDRALDREEQPELTLILTALDGGAPSRSGTTTVHIEVVDINDNSPQFVQSLYKVQVPENNPLNAFVVTVSATDLDAGVYGNVTYSLFQGYGVFQPFVIDEITGEIHLSKELDFEEISNHNIEIAATDGGGLSGKCTVAVQVLDVNDNAPELTIRKLTVLVPENSAETVVAVFSVSDSDSGDNGRMVCSIPNNIPFLLKPTFENYYTLVTEGPLDRENRAEYNITITVSDLGTPRLTTQHTITVQVSDINDNAPAFTQTSYTMFVHENNSPALHIGTISATDSDSGSNAHITYSLLPPDDPQLALDSLISINVDNGQLFALRALDYEALQSFEFYVGATDGGSPALSSQTLVRMVVLDDNDNAPFVLYPLQNASAPCTELLPRAAEPGYLITKVVAVDRDSGQNAWLSFQLLKATEPGLFSVWAHNGEVRTTRLLSERDAQKHKLLLLVKDNGDPLRSANVTLHVLVVDGFSQPYLPLAEVAQDSMQDNYDVLTLYLVIALASVSSLFLLSVVLFVGVRLCRRAREASLGDYSVPEGHFPSHLVDVSGAGTLSQSYQYEVCLNGGTRTNEFNFLKPLFPILPTQAAAAEERENAVVHNSVGFY.

The first 30 residues, M1 to A30, serve as a signal peptide directing secretion. At I31–L691 the chain is on the extracellular side. 5 consecutive Cadherin domains span residues M35–F133, M138–F242, Y247–L346, L351–F450, and Y455–V560. Residues N169, N276, and N417 are each glycosylated (N-linked (GlcNAc...) asparagine). N566 carries N-linked (GlcNAc...) asparagine glycosylation. The region spanning A567–L670 is the Cadherin 6 domain. The helical transmembrane segment at V692–V712 threads the bilayer. The Cytoplasmic portion of the chain corresponds to R713 to Y797.

Expressed in brain.

Its subcellular location is the cell membrane. Its function is as follows. Potential calcium-dependent cell-adhesion protein. May be involved in the establishment and maintenance of specific neuronal connections in the brain. This Rattus norvegicus (Rat) protein is Protocadherin-3 (Pcdh3).